The chain runs to 412 residues: Serine hydroxymethyltransferase (412 aa).

(6S)-5,6,7,8-tetrahydrofolate contacts are provided by residues Leu117 and 121-123 (GHL). Residue Lys226 is modified to N6-(pyridoxal phosphate)lysine. 349–351 (SPF) contributes to the (6S)-5,6,7,8-tetrahydrofolate binding site.

Belongs to the SHMT family. Homodimer. Pyridoxal 5'-phosphate is required as a cofactor.

It localises to the cytoplasm. It catalyses the reaction (6R)-5,10-methylene-5,6,7,8-tetrahydrofolate + glycine + H2O = (6S)-5,6,7,8-tetrahydrofolate + L-serine. The protein operates within one-carbon metabolism; tetrahydrofolate interconversion. It functions in the pathway amino-acid biosynthesis; glycine biosynthesis; glycine from L-serine: step 1/1. Catalyzes the reversible interconversion of serine and glycine with tetrahydrofolate (THF) serving as the one-carbon carrier. This reaction serves as the major source of one-carbon groups required for the biosynthesis of purines, thymidylate, methionine, and other important biomolecules. Also exhibits THF-independent aldolase activity toward beta-hydroxyamino acids, producing glycine and aldehydes, via a retro-aldol mechanism. In Halothermothrix orenii (strain H 168 / OCM 544 / DSM 9562), this protein is Serine hydroxymethyltransferase.